We begin with the raw amino-acid sequence, 484 residues long: Glutamyl-tRNA(Gln) amidotransferase subunit B, mitochondrial (484 aa).

It belongs to the GatB/GatE family. GatB subfamily. In terms of assembly, subunit of the heterotrimeric GatFAB amidotransferase (AdT) complex, composed of A, B and F subunits.

Its subcellular location is the mitochondrion. It catalyses the reaction L-glutamyl-tRNA(Gln) + L-glutamine + ATP + H2O = L-glutaminyl-tRNA(Gln) + L-glutamate + ADP + phosphate + H(+). Functionally, allows the formation of correctly charged Gln-tRNA(Gln) through the transamidation of misacylated Glu-tRNA(Gln) in the mitochondria. The reaction takes place in the presence of glutamine and ATP through an activated gamma-phospho-Glu-tRNA(Gln). This Candida tropicalis (strain ATCC MYA-3404 / T1) (Yeast) protein is Glutamyl-tRNA(Gln) amidotransferase subunit B, mitochondrial.